The primary structure comprises 465 residues: Nuclear pore complex protein NUP50B (465 aa).

2 disordered regions span residues 1-44 (MGDS…TFNT) and 59-244 (RRTD…FHQH). Gly-2 carries the N-acetylglycine modification. Positions 26-35 (GLDDDDEDTS) are enriched in acidic residues. Residues 81-97 (PFTAPAPSTAAAETTKP) show a composition bias toward low complexity. 3 stretches are compositionally biased toward basic and acidic residues: residues 105 to 127 (TLAD…KSDA), 141 to 157 (ISAK…KEMS), and 216 to 233 (TEKE…EKNG). Position 125 is a phosphoserine (Ser-125). Tandem repeats lie at residues 266 to 267 (FG), 286 to 287 (FG), and 297 to 298 (FG). The 3 X 2 AA repeats of F-G stretch occupies residues 266–298 (FGLVPQEGSTGSGSEQSSFSFGQANNGNSSLFG). Disordered regions lie at residues 308-330 (KSTE…GEEN) and 439-465 (HKDS…AEDA). Thr-455 carries the phosphothreonine modification. The segment covering 456-465 (PENSPSAEDA) has biased composition (polar residues). Ser-459 is modified (phosphoserine).

Part of the nuclear pore complex (NPC). The NPC has an eight-fold symmetrical structure comprising a central transport channel and two rings, the cytoplasmic and nuclear rings, to which eight filaments are attached. The cytoplasmic filaments have loose ends, while the nuclear filaments are joined in a distal ring, forming a nuclear basket. NPCs are highly dynamic in configuration and composition, and can be devided in 3 subcomplexes, the NUP62 subcomplex, the NUP107-160 subcomplex and the NUP93 subcomplex, containing approximately 30 different nucleoporin proteins.

The protein localises to the nucleus. It localises to the nucleoplasm. Its subcellular location is the nuclear pore complex. Its function is as follows. Probably involved in nucleocytoplasmic transport via its interactions with importins and Ran, rather than by forming part of the nuclear pore complex (NPC) scaffolding. The protein is Nuclear pore complex protein NUP50B of Arabidopsis thaliana (Mouse-ear cress).